We begin with the raw amino-acid sequence, 48 residues long: MFLFNLEQSIGLLPEAYLPFDPLVDVLPIIPLLFLLLAFVWQAAVKFR.

Residues 1–11 (MFLFNLEQSIG) constitute a propeptide that is removed on maturation. The chain crosses the membrane as a helical span at residues 23–43 (LVDVLPIIPLLFLLLAFVWQA).

Belongs to the PsbK family. In terms of assembly, PSII is composed of 1 copy each of membrane proteins PsbA, PsbB, PsbC, PsbD, PsbE, PsbF, PsbH, PsbI, PsbJ, PsbK, PsbL, PsbM, PsbT, PsbX, PsbY, PsbZ, Psb30/Ycf12, at least 3 peripheral proteins of the oxygen-evolving complex and a large number of cofactors. It forms dimeric complexes.

It localises to the plastid. It is found in the chloroplast thylakoid membrane. Its function is as follows. One of the components of the core complex of photosystem II (PSII). PSII is a light-driven water:plastoquinone oxidoreductase that uses light energy to abstract electrons from H(2)O, generating O(2) and a proton gradient subsequently used for ATP formation. It consists of a core antenna complex that captures photons, and an electron transfer chain that converts photonic excitation into a charge separation. The protein is Photosystem II reaction center protein K of Lepocinclis buetschlii.